The primary structure comprises 217 residues: NADPH-dependent 3-demethoxyubiquinone 3-hydroxylase, mitochondrial (217 aa).

The N-terminal 35 residues, 1 to 35 (MSCAGAAAAPRLWRLRPGARRSLSAYGRRTSVRFR), are a transit peptide targeting the mitochondrion. Positions 11-29 (RLWRLRPGARRSLSAYGRR) are required for nuclear localization. A run of 2 repeats spans residues 48 to 129 (AVDR…TALL) and 130 to 217 (GKEG…SERL). Residues 48–217 (AVDRIIRVDH…RVAIYLSERL (170 aa)) form a 2 X approximate tandem repeats region. Arg-51 provides a ligand contact to NADH. Positions 60, 90, 93, 142, 178, and 181 each coordinate Fe cation. NADH is bound by residues Tyr-212 and Arg-216.

This sequence belongs to the COQ7 family. Component of a multi-subunit COQ enzyme complex. Interacts with COQ8B and COQ6. Interacts with COQ9. Fe cation is required as a cofactor. Expressed dominantly in heart and skeletal muscle.

The protein localises to the mitochondrion inner membrane. The protein resides in the mitochondrion. It is found in the nucleus. It localises to the chromosome. It catalyses the reaction a 5-methoxy-2-methyl-3-(all-trans-polyprenyl)benzoquinone + NADH + O2 = a 3-demethylubiquinone + NAD(+) + H2O. Its pathway is cofactor biosynthesis; ubiquinone biosynthesis. Functionally, catalyzes the hydroxylation of the 5-methoxy-2-methyl-3-(all-trans-polyprenyl)benzoquinone at the C6 position and participates in the biosynthesis of ubiquinone. Catalyzes the reaction through a substrate-mediated reduction pathway, whereby NADH shuttles electrons to 5-methoxy-2-methyl-3-(all-trans-decaprenyl)benzoquinone, which then transfers the electrons to the two Fe(3+) centers. The binding of 5-methoxy-2-methyl-3-(all-trans-polyprenyl)benzoquinone (DMQn) mediates reduction of the diiron center by nicotinamide adenine dinucleotide (NADH) and initiates oxygen activation for subsequent DMQ hydroxylation. The physiological substrates are 5-methoxy-2-methyl-3-(all-trans-nonaprenyl)benzoquinone (DMQ(9)) and 5-methoxy-2-methyl-3-(all-trans-decaprenyl)benzoquinone (DMQ(10)), however in vitro the enzyme does not have any specificity concerning the length of the polyprenyl tail, and accepts tails of various lengths with similar efficiency. Also has a structural role in the COQ enzyme complex, stabilizing other COQ polypeptides. Involved in lifespan determination in a ubiquinone-independent manner. Plays a role in modulating mitochondrial stress responses, acting in the nucleus, perhaps via regulating gene expression, independent of its characterized mitochondrial function in ubiquinone biosynthesis. The polypeptide is NADPH-dependent 3-demethoxyubiquinone 3-hydroxylase, mitochondrial (Homo sapiens (Human)).